Here is a 207-residue protein sequence, read N- to C-terminus: Small ribosomal subunit protein uS4 (207 aa).

The disordered stretch occupies residues Lys31–Gln55. Residues Gly42–Gly53 show a composition bias toward polar residues. The S4 RNA-binding domain maps to Ser97–Leu160.

The protein belongs to the universal ribosomal protein uS4 family. Part of the 30S ribosomal subunit. Contacts protein S5. The interaction surface between S4 and S5 is involved in control of translational fidelity.

In terms of biological role, one of the primary rRNA binding proteins, it binds directly to 16S rRNA where it nucleates assembly of the body of the 30S subunit. Functionally, with S5 and S12 plays an important role in translational accuracy. In Burkholderia ambifaria (strain MC40-6), this protein is Small ribosomal subunit protein uS4.